The following is a 756-amino-acid chain: U3 small nucleolar RNA-associated protein 25 homolog (756 aa).

The tract at residues 1 to 159 (MGKRGSRSQS…SQTSPEEFTD (159 aa)) is disordered. 2 promotes p53/TP53 degradation regions span residues 1–185 (MGKR…SLKA) and 573–635 (VQLP…KKEE). Ser-10 is subject to Phosphoserine. The segment covering 25-43 (RDFGEEHPFYDRVSRKEAK) has biased composition (basic and acidic residues). Phosphoserine occurs at positions 50, 52, 58, 60, 62, and 64. 2 stretches are compositionally biased toward acidic residues: residues 54–64 (DSSDSESDSES) and 84–121 (EEEE…EEMA). The represses p53/TP53 degradation stretch occupies residues 636–697 (LNFTHICEYT…YELPTYPHFY (62 aa)).

It belongs to the UTP25 family. Interacts with CAPN3; the interaction is required for CAPN3 translocation to the nucleolus. Phosphorylated. Phosphorylation is required to promote p53/TP53 degradation in the nucleolus which promotes cell cycle progression and liver development. In terms of tissue distribution, expressed in colon.

It localises to the nucleus. The protein localises to the nucleolus. Functionally, component of the ribosomal small subunit processome for the biogenesis of ribosomes, functions in pre-ribosomal RNA (pre-rRNA) processing. Essential for embryonic development in part through the regulation of p53 pathway. Controls the expansion growth of digestive organs and liver. Also involved in the sympathetic neuronal development. Mediates, with CAPN3, the proteasome-independent degradation of p53/TP53. This chain is U3 small nucleolar RNA-associated protein 25 homolog, found in Homo sapiens (Human).